The primary structure comprises 425 residues: Glutamyl-tRNA reductase (425 aa).

Substrate contacts are provided by residues 49–52, Ser-107, 112–114, and Gln-118; these read TCNR and EPQ. The Nucleophile role is filled by Cys-50. Position 187 to 192 (187 to 192) interacts with NADP(+); sequence GAGETI.

It belongs to the glutamyl-tRNA reductase family. In terms of assembly, homodimer.

The enzyme catalyses (S)-4-amino-5-oxopentanoate + tRNA(Glu) + NADP(+) = L-glutamyl-tRNA(Glu) + NADPH + H(+). The protein operates within porphyrin-containing compound metabolism; protoporphyrin-IX biosynthesis; 5-aminolevulinate from L-glutamyl-tRNA(Glu): step 1/2. Its function is as follows. Catalyzes the NADPH-dependent reduction of glutamyl-tRNA(Glu) to glutamate 1-semialdehyde (GSA). This chain is Glutamyl-tRNA reductase, found in Pseudomonas putida (strain W619).